Here is an 814-residue protein sequence, read N- to C-terminus: Glycosyltransferase GlyD (814 aa).

Residues 1 to 264 (MNKTIVLAGD…SQILQHHMGE (264 aa)) form a GT8 domain region. Residues 8–13 (AGDRNY) and 102–103 (DS) each bind UDP. Mn(2+)-binding residues include Asp102, Asp104, and His226. 226 to 232 (HFTTYRK) contributes to the UDP binding site. Residues 542-814 (EKPLDIIQVK…NSQIVARILN (273 aa)) are GT-D domain.

It in the N-terminal section; belongs to the glycosyltransferase 8 family. In the C-terminal section; belongs to the GT-D family.

The protein operates within protein modification; protein glycosylation. Functionally, involved in the polymorphic O-glycosylation of the serine-rich repeat protein PsrP. Catalyzes the third step in glycosylation PsrP in this bacteria. Transfers glucose from UDP-glucose to the terminal glucose moiety of already-glycosylated PsrP (using truncated substrates with PsrP SSR1-GlcNAc-Glc); the C-terminal GT-D domain is sufficient for this reaction in vitro. Also transfers galactose from UDP-galactose to the terminal glucose moiety of already-glycosylated PsrP; the C-terminal GT-D domain is also sufficient for this reaction in vitro. Activity is much higher with UDP-glucose, and the enzyme has a very marked preference for PsrP substrate that has already been modified by GlcNAc and glucose. In vitro has hydrolytic activity against UDP-galactose and to a lesser extent against UDP-glucose. Its function is as follows. Also catalyzes the fourth step in glycosylation of PsrP in this bacteria. Can transfer the sugar from both UDP-glucose and UDP-galactose to the terminal sugar moiety of PsrP-GlcNAc-Glc-Glc and PsrP-GlcNAc-Glc-Gal; the C-terminal GT-D domain is also sufficient for this reaction in vitro (using truncated substrates with glycosylated PsrP SSR1). The N-terminal GT-D domain can transfer galactose from UDP-galactose to PsrP-GlcNAc-Glc-Gal or PsrP-GlcNAc-Glc-Glc in the fourth step. This is Glycosyltransferase GlyD from Streptococcus pneumoniae serotype 4 (strain ATCC BAA-334 / TIGR4).